A 582-amino-acid chain; its full sequence is Hemagglutinin-neuraminidase (582 aa).

Residues 35–55 traverse the membrane as a helical segment; it reads ILVLSVQAVTLILVIVTLGEL. 3 disulfides stabilise this stretch: Cys178–Cys202, Cys192–Cys253, and Cys244–Cys257. N-linked (GlcNAc...) asparagine; by host glycans are attached at residues Asn284 and Asn329. Intrachain disulfides connect Cys350-Cys471, Cys382-Cys392, and Cys465-Cys475. Asn400 and Asn448 each carry an N-linked (GlcNAc...) asparagine; by host glycan. N-linked (GlcNAc...) asparagine; by host glycosylation occurs at Asn507. An intrachain disulfide couples Cys545 to Cys556.

This sequence belongs to the paramyxoviruses hemagglutinin-neuraminidase family. Homodimer. Further forms homotetramer (dimer of dimers). Interacts with F protein trimer.

It is found in the virion membrane. It localises to the host cell membrane. The enzyme catalyses Hydrolysis of alpha-(2-&gt;3)-, alpha-(2-&gt;6)-, alpha-(2-&gt;8)- glycosidic linkages of terminal sialic acid residues in oligosaccharides, glycoproteins, glycolipids, colominic acid and synthetic substrates.. In terms of biological role, attaches the virus to alpha-2,3-linked sialic acid-containing cell receptors and thereby initiating infection. Binding of HN protein to the receptor induces a conformational change that allows the F protein to trigger virion/cell membranes fusion. Binds to the glycan motifs sialyl Lewis (SLe) and GM2 ganglioside (GM2-glycan). Functionally, neuraminidase activity ensures the efficient spread of the virus by dissociating the mature virions from the neuraminic acid containing glycoproteins. The chain is Hemagglutinin-neuraminidase (HN) from Homo sapiens (Human).